A 103-amino-acid chain; its full sequence is Integration host factor subunit alpha (103 aa).

Positions G50–P72 are disordered. The segment covering L54–E69 has biased composition (basic and acidic residues).

The protein belongs to the bacterial histone-like protein family. As to quaternary structure, heterodimer of an alpha and a beta chain.

In terms of biological role, this protein is one of the two subunits of integration host factor, a specific DNA-binding protein that functions in genetic recombination as well as in transcriptional and translational control. The polypeptide is Integration host factor subunit alpha (Coxiella burnetii (strain CbuK_Q154) (Coxiella burnetii (strain Q154))).